A 223-amino-acid chain; its full sequence is GTP cyclohydrolase 1 (223 aa).

3 residues coordinate Zn(2+): cysteine 114, histidine 117, and cysteine 185.

It belongs to the GTP cyclohydrolase I family. As to quaternary structure, homomer.

The catalysed reaction is GTP + H2O = 7,8-dihydroneopterin 3'-triphosphate + formate + H(+). It functions in the pathway cofactor biosynthesis; 7,8-dihydroneopterin triphosphate biosynthesis; 7,8-dihydroneopterin triphosphate from GTP: step 1/1. The protein is GTP cyclohydrolase 1 of Chlorobium phaeovibrioides (strain DSM 265 / 1930) (Prosthecochloris vibrioformis (strain DSM 265)).